The sequence spans 128 residues: Small ribosomal subunit protein uS11 (128 aa).

This sequence belongs to the universal ribosomal protein uS11 family. As to quaternary structure, part of the 30S ribosomal subunit. Interacts with proteins S7 and S18. Binds to IF-3.

Its function is as follows. Located on the platform of the 30S subunit, it bridges several disparate RNA helices of the 16S rRNA. Forms part of the Shine-Dalgarno cleft in the 70S ribosome. The sequence is that of Small ribosomal subunit protein uS11 from Wolbachia pipientis wMel.